A 529-amino-acid polypeptide reads, in one-letter code: Neuronal acetylcholine receptor subunit alpha-2 (529 aa).

The first 26 residues, 1-26 (MGPSCPVFLSFTKLSLWWLLLTPAGG), serve as a signal peptide directing secretion. The interval 27 to 56 (EEAKRPPPRAPGDPLSSPSPTALPQGGSHT) is disordered. The Extracellular portion of the chain corresponds to 27–264 (EEAKRPPPRA…VTYAFIIRRL (238 aa)). Residues Asn79 and Asn129 are each glycosylated (N-linked (GlcNAc...) asparagine). Residues Cys183 and Cys197 are joined by a disulfide bond. N-linked (GlcNAc...) asparagine glycosylation occurs at Asn235. A disulfide bridge connects residues Cys247 and Cys248. 3 helical membrane passes run 265-289 (PLFY…VFYL), 297-315 (ITLC…LLIT), and 331-352 (YLLF…VLNV). Over 353–502 (HHRSPSTHTM…WKYVAMVIDR (150 aa)) the chain is Cytoplasmic. Residues 503–521 (IFLWLFIIVCFLGTIGLFL) form a helical membrane-spanning segment.

The protein belongs to the ligand-gated ion channel (TC 1.A.9) family. Acetylcholine receptor (TC 1.A.9.1) subfamily. Alpha-2/CHRNA2 sub-subfamily. As to quaternary structure, neuronal AChR is composed of two different types of subunits: alpha and non-alpha (beta). CHRNA2/alpha-2 subunit can be combined to CHRNB2/beta-2 or CHRNB4/beta-4 to give rise to functional receptors. Both CHRNA2:CHRNB2 and CHRNA2:CHRNB4 nAChR complexes are heteropentamers with two subtypes: LS (low agonist sensitivity) with a (CHRNA2)3:(CHRNB2/4)2 and HS (high agonist sensitivity) with a (CHRNA2)2:(CHRNB2/4)3 stoichiometries; the subtypes differ in their subunit binding interfaces which are involved in ligand binding.

The protein resides in the synaptic cell membrane. It localises to the cell membrane. It carries out the reaction Ca(2+)(in) = Ca(2+)(out). The catalysed reaction is K(+)(in) = K(+)(out). The enzyme catalyses Na(+)(in) = Na(+)(out). Functionally, component of neuronal acetylcholine receptors (nAChRs) that function as pentameric, ligand-gated cation channels with high calcium permeability among other activities. nAChRs are excitatory neurotrasnmitter receptors formed by a collection of nAChR subunits known to mediate synaptic transmission in the nervous system and the neuromuscular junction. Each nAchR subunit confers differential attributes to channel properties, including activation, deactivation and desensitization kinetics, pH sensitivity, cation permeability, and binding to allosteric modulators. CHRNA2 forms heteropentameric neuronal acetylcholine receptors with CHRNB2 and CHRNB4 and plays a role in nicotine dependence. The sequence is that of Neuronal acetylcholine receptor subunit alpha-2 (CHRNA2) from Pan troglodytes (Chimpanzee).